The chain runs to 370 residues: L-selectin (370 aa).

Residues Met-1–Cys-28 form the signal peptide. A propeptide spanning residues Asp-29–Cys-38 is cleaved from the precursor. The Extracellular portion of the chain corresponds to Trp-39–Pro-333. A C-type lectin domain is found at Ala-55–Cys-155. 10 disulfide bridges follow: Cys-57/Cys-155, Cys-128/Cys-147, Cys-128/Cys-160, Cys-160/Cys-171, Cys-165/Cys-180, Cys-182/Cys-191, Cys-197/Cys-241, Cys-227/Cys-254, Cys-259/Cys-303, and Cys-289/Cys-316. 3 N-linked (GlcNAc...) asparagine glycosylation sites follow: Asn-60, Asn-77, and Asn-104. Ca(2+) contacts are provided by Glu-118, Asn-120, Glu-126, Asn-143, and Asp-144. An EGF-like domain is found at Tyr-156–Gln-192. Asn-177 carries N-linked (GlcNAc...) asparagine glycosylation. 2 consecutive Sushi domains span residues Thr-195–Val-256 and Ile-257–Lys-318. N-linked (GlcNAc...) asparagine glycosylation is found at Asn-216, Asn-226, and Asn-246. N-linked (GlcNAc...) asparagine glycans are attached at residues Asn-308 and Asn-320. Residues Leu-334–Leu-354 form a helical membrane-spanning segment. The Cytoplasmic segment spans residues Ala-355–Gly-370.

Belongs to the selectin/LECAM family. Interaction with SELPLG/PSGL1 and PODXL2 is required for promoting recruitment and rolling of leukocytes. This interaction is dependent on the sialyl Lewis X glycan modification of SELPLG and PODXL2, and tyrosine sulfation modifications of SELPLG. Sulfation on 'Tyr-51' of SELPLG is important for L-selectin binding. Post-translationally, N-glycosylated. In terms of tissue distribution, highly expressed in lymphocytes from peripheral lymph nodes. Low in lymphocytes isolated from Peyer patches.

The protein localises to the cell membrane. Its function is as follows. Calcium-dependent lectin that mediates cell adhesion by binding to glycoproteins on neighboring cells. Mediates the adherence of lymphocytes to endothelial cells of high endothelial venules in peripheral lymph nodes. Promotes initial tethering and rolling of leukocytes in endothelia. This chain is L-selectin (SELL), found in Bos taurus (Bovine).